The primary structure comprises 494 residues: Anthranilate synthase component 1 (494 aa).

L-tryptophan contacts are provided by residues serine 50 and 276 to 278 (PYM). 311–312 (GT) is a chorismate binding site. Glutamate 338 contacts Mg(2+). Residues tyrosine 426, arginine 446, 460 to 462 (GAG), and glycine 462 contribute to the chorismate site. Mg(2+) is bound at residue glutamate 475.

This sequence belongs to the anthranilate synthase component I family. In terms of assembly, heterotetramer consisting of two non-identical subunits: a beta subunit (TrpG) and a large alpha subunit (TrpE). Mg(2+) is required as a cofactor.

The catalysed reaction is chorismate + L-glutamine = anthranilate + pyruvate + L-glutamate + H(+). It participates in amino-acid biosynthesis; L-tryptophan biosynthesis; L-tryptophan from chorismate: step 1/5. Feedback inhibited by tryptophan. Functionally, part of a heterotetrameric complex that catalyzes the two-step biosynthesis of anthranilate, an intermediate in the biosynthesis of L-tryptophan. In the first step, the glutamine-binding beta subunit (TrpG) of anthranilate synthase (AS) provides the glutamine amidotransferase activity which generates ammonia as a substrate that, along with chorismate, is used in the second step, catalyzed by the large alpha subunit of AS (TrpE) to produce anthranilate. In the absence of TrpG, TrpE can synthesize anthranilate directly from chorismate and high concentrations of ammonia. In Acetivibrio thermocellus (Hungateiclostridium thermocellum), this protein is Anthranilate synthase component 1 (trpE).